Consider the following 293-residue polypeptide: Transcriptional regulator ICP22 homolog (293 aa).

Disordered regions lie at residues 1–49 and 175–293; these read MPHG…QRID and RFLE…SARR. Over residues 21-31 the composition is skewed to low complexity; the sequence is TPSTSPLIPSL. Residues 190–210 show a composition bias toward acidic residues; the sequence is EECDVSGDESPSEEEEEDEAS. The span at 272–281 shows a compositional bias: basic residues; sequence AAKKRRKRQP. Residues 282–293 show a composition bias toward basic and acidic residues; sequence PKGERPTKSARR.

It belongs to the herpesviridae ICP22 family.

This Equus caballus (Horse) protein is Transcriptional regulator ICP22 homolog (IR4).